Here is a 295-residue protein sequence, read N- to C-terminus: tRNA pseudouridine synthase B (295 aa).

Catalysis depends on Asp42, which acts as the Nucleophile.

It belongs to the pseudouridine synthase TruB family. Type 1 subfamily.

The enzyme catalyses uridine(55) in tRNA = pseudouridine(55) in tRNA. In terms of biological role, responsible for synthesis of pseudouridine from uracil-55 in the psi GC loop of transfer RNAs. The protein is tRNA pseudouridine synthase B of Cutibacterium acnes (strain DSM 16379 / KPA171202) (Propionibacterium acnes).